A 665-amino-acid polypeptide reads, in one-letter code: BTB/POZ domain-containing protein At1g30440 (665 aa).

The region spanning 28-98 (SDIVVEVGEM…CYGVKLELTA (71 aa)) is the BTB domain. One can recognise an NPH3 domain in the interval 214 to 508 (DWWYEDASML…VQVLFFEQLQ (295 aa)). The tract at residues 260–280 (LKRRRGGPESSGRFSTPLGSG) is disordered. A compositionally biased stretch (polar residues) spans 271 to 280 (GRFSTPLGSG). Ser-279 bears the Phosphoserine mark. Residues 281-306 (NVLSEEEQKNLLEEIQELLRMQKGLV) are a coiled coil. Position 449 is a phosphotyrosine (Tyr-449). A compositionally biased stretch (polar residues) spans 626 to 639 (SAQEGSVSKSNNEN). Positions 626–665 (SAQEGSVSKSNNENVKIEKLKDVKERRGKHKKASSISSER) are disordered. Residues 640-650 (VKIEKLKDVKE) show a composition bias toward basic and acidic residues.

This sequence belongs to the NPH3 family.

It participates in protein modification; protein ubiquitination. Its function is as follows. May act as a substrate-specific adapter of an E3 ubiquitin-protein ligase complex (CUL3-RBX1-BTB) which mediates the ubiquitination and subsequent proteasomal degradation of target proteins. The protein is BTB/POZ domain-containing protein At1g30440 of Arabidopsis thaliana (Mouse-ear cress).